The following is a 491-amino-acid chain: Ketol-acid reductoisomerase (NADP(+)) (491 aa).

Positions 16–207 constitute a KARI N-terminal Rossmann domain; that stretch reads IKKCRFMKEN…GGHRAGVLES (192 aa). NADP(+) contacts are provided by residues 44–47, Lys-67, Ser-77, and 107–109; these read CGSQ and DKQ. Residue His-131 is part of the active site. An NADP(+)-binding site is contributed by Gly-157. 2 consecutive KARI C-terminal knotted domains span residues 208–344 and 345–484; these read SFIA…NILS and YSEK…MKEM. 4 residues coordinate Mg(2+): Asp-216, Glu-220, Glu-389, and Glu-393. A substrate-binding site is contributed by Ser-414.

This sequence belongs to the ketol-acid reductoisomerase family. Mg(2+) is required as a cofactor.

It carries out the reaction (2R)-2,3-dihydroxy-3-methylbutanoate + NADP(+) = (2S)-2-acetolactate + NADPH + H(+). The enzyme catalyses (2R,3R)-2,3-dihydroxy-3-methylpentanoate + NADP(+) = (S)-2-ethyl-2-hydroxy-3-oxobutanoate + NADPH + H(+). It participates in amino-acid biosynthesis; L-isoleucine biosynthesis; L-isoleucine from 2-oxobutanoate: step 2/4. The protein operates within amino-acid biosynthesis; L-valine biosynthesis; L-valine from pyruvate: step 2/4. Functionally, involved in the biosynthesis of branched-chain amino acids (BCAA). Catalyzes an alkyl-migration followed by a ketol-acid reduction of (S)-2-acetolactate (S2AL) to yield (R)-2,3-dihydroxy-isovalerate. In the isomerase reaction, S2AL is rearranged via a Mg-dependent methyl migration to produce 3-hydroxy-3-methyl-2-ketobutyrate (HMKB). In the reductase reaction, this 2-ketoacid undergoes a metal-dependent reduction by NADPH to yield (R)-2,3-dihydroxy-isovalerate. The protein is Ketol-acid reductoisomerase (NADP(+)) of Buchnera aphidicola subsp. Schizaphis graminum (strain Sg).